The sequence spans 455 residues: 1,4-beta-D-glucan cellobiohydrolase C (455 aa).

The first 19 residues, 1 to 19 (MHYSASGLALAFLLPAIQA), serve as a signal peptide directing secretion. Residues 20–55 (QQTLYGQCGGSGWTGATSCVAGAACSTLNQWYAQCL) enclose the CBM1 domain. 2 cysteine pairs are disulfide-bonded: cysteine 27/cysteine 44 and cysteine 38/cysteine 54. A thr-rich linker region spans residues 59–92 (TTTSTTLTTTTSSVTTTSNPGSTTTTSSVTVTAT). The segment at 66–86 (TTTTSSVTTTSNPGSTTTTSS) is disordered. The tract at residues 93–450 (ASGNPFSGYQ…QAYFVQLLQN (358 aa)) is catalytic. The active site involves aspartate 185. 2 disulfides stabilise this stretch: cysteine 186–cysteine 245 and cysteine 377–cysteine 424. Aspartate 231 functions as the Proton donor in the catalytic mechanism. Aspartate 410 acts as the Nucleophile in catalysis.

Belongs to the glycosyl hydrolase 6 (cellulase B) family.

The protein resides in the secreted. It catalyses the reaction Hydrolysis of (1-&gt;4)-beta-D-glucosidic linkages in cellulose and cellotetraose, releasing cellobiose from the non-reducing ends of the chains.. In terms of biological role, the biological conversion of cellulose to glucose generally requires three types of hydrolytic enzymes: (1) Endoglucanases which cut internal beta-1,4-glucosidic bonds; (2) Exocellobiohydrolases that cut the disaccharide cellobiose from the non-reducing end of the cellulose polymer chain; (3) Beta-1,4-glucosidases which hydrolyze the cellobiose and other short cello-oligosaccharides to glucose. Active against carboxymethylcellulose, beta-glucan and lichenan. The chain is 1,4-beta-D-glucan cellobiohydrolase C (cbhC) from Emericella nidulans (strain FGSC A4 / ATCC 38163 / CBS 112.46 / NRRL 194 / M139) (Aspergillus nidulans).